Consider the following 132-residue polypeptide: Small ribosomal subunit protein uS11 (132 aa).

Belongs to the universal ribosomal protein uS11 family. In terms of assembly, part of the 30S ribosomal subunit. Interacts with proteins S7 and S18. Binds to IF-3.

Its function is as follows. Located on the platform of the 30S subunit, it bridges several disparate RNA helices of the 16S rRNA. Forms part of the Shine-Dalgarno cleft in the 70S ribosome. The chain is Small ribosomal subunit protein uS11 from Bifidobacterium animalis subsp. lactis (strain AD011).